The chain runs to 582 residues: 5-aminolevulinate synthase, erythroid-specific, mitochondrial (582 aa).

Residues 1–44 constitute a mitochondrion transit peptide; sequence MLLQRCPVLIRSPTAILGKMIKTHQFLIGIGRCPILATQGTTCS. Arg158 is a binding site for succinyl-CoA. 2 residues coordinate pyridoxal 5'-phosphate: Cys253 and Phe254. Succinyl-CoA-binding residues include Ser275 and Lys294. Residues Ser327, His355, and Thr383 each coordinate pyridoxal 5'-phosphate. Residue Lys386 is part of the active site. An N6-(pyridoxal phosphate)lysine modification is found at Lys386. Residues Thr415 and Thr416 each contribute to the pyridoxal 5'-phosphate site. Position 503 (Thr503) interacts with succinyl-CoA.

The protein belongs to the class-II pyridoxal-phosphate-dependent aminotransferase family. Homodimer. The cofactor is pyridoxal 5'-phosphate.

It localises to the mitochondrion inner membrane. The enzyme catalyses succinyl-CoA + glycine + H(+) = 5-aminolevulinate + CO2 + CoA. The protein operates within porphyrin-containing compound metabolism; protoporphyrin-IX biosynthesis; 5-aminolevulinate from glycine: step 1/1. Its function is as follows. Catalyzes the pyridoxal 5'-phosphate (PLP)-dependent condensation of succinyl-CoA and glycine to form aminolevulinic acid (ALA), with CoA and CO2 as by-products. Contributes significantly to heme formation during erythropoiesis. This is 5-aminolevulinate synthase, erythroid-specific, mitochondrial (ALAS2) from Delphinapterus leucas (Beluga whale).